The primary structure comprises 398 residues: tRNA-specific 2-thiouridylase MnmA (398 aa).

ATP is bound by residues 20-27 and Leu46; that span reads AMSGGVDS. Cys114 acts as the Nucleophile in catalysis. Cysteines 114 and 210 form a disulfide. Residue Gly138 participates in ATP binding. Positions 160 to 162 are interaction with tRNA; it reads RDQ. Cys210 functions as the Cysteine persulfide intermediate in the catalytic mechanism.

It belongs to the MnmA/TRMU family.

It is found in the cytoplasm. The enzyme catalyses S-sulfanyl-L-cysteinyl-[protein] + uridine(34) in tRNA + AH2 + ATP = 2-thiouridine(34) in tRNA + L-cysteinyl-[protein] + A + AMP + diphosphate + H(+). Catalyzes the 2-thiolation of uridine at the wobble position (U34) of tRNA, leading to the formation of s(2)U34. The sequence is that of tRNA-specific 2-thiouridylase MnmA from Brucella canis (strain ATCC 23365 / NCTC 10854 / RM-666).